The primary structure comprises 931 residues: Protein translocase subunit SecA (931 aa).

ATP-binding positions include glutamine 87, 105–109 (GEGKT), and aspartate 515. The Zn(2+) site is built by cysteine 915, cysteine 917, cysteine 926, and histidine 927.

This sequence belongs to the SecA family. Monomer and homodimer. Part of the essential Sec protein translocation apparatus which comprises SecA, SecYEG and auxiliary proteins SecDF-YajC and YidC. The cofactor is Zn(2+).

It is found in the cell inner membrane. The protein localises to the cytoplasm. The enzyme catalyses ATP + H2O + cellular proteinSide 1 = ADP + phosphate + cellular proteinSide 2.. Part of the Sec protein translocase complex. Interacts with the SecYEG preprotein conducting channel. Has a central role in coupling the hydrolysis of ATP to the transfer of proteins into and across the cell membrane, serving both as a receptor for the preprotein-SecB complex and as an ATP-driven molecular motor driving the stepwise translocation of polypeptide chains across the membrane. The protein is Protein translocase subunit SecA of Burkholderia pseudomallei (strain K96243).